The primary structure comprises 774 residues: Neprilysin-2 (774 aa).

At M1–S20 the chain is on the cytoplasmic side. A helical; Signal-anchor for type II membrane protein transmembrane segment spans residues L21–G41. The Extracellular segment spans residues K42–W774. A disordered region spans residues S50–D79. The span at D60 to K74 shows a compositional bias: polar residues. The Peptidase M13 domain maps to V83–W774. 5 disulfides stabilise this stretch: C84–C89, C107–C759, C115–C719, C171–C424, and C646–C771. N-linked (GlcNAc...) asparagine glycosylation is found at N173, N239, N264, N305, N315, N358, and N554. H609 serves as a coordination point for Zn(2+). E610 is an active-site residue. H613 is a Zn(2+) binding site. N-linked (GlcNAc...) asparagine glycosylation is present at N653. Zn(2+) is bound at residue E671. D675 (proton donor) is an active-site residue.

The protein belongs to the peptidase M13 family. The cofactor is Zn(2+). N-glycosylated. Post-translationally, the soluble form is probably produced by proteolytic cleavage. Detected in the stellate cells in the main segment and the bar-shaped cells in the initial segment of male and female Malpighian tubules (at protein level). Expressed in the spermatheca (at protein level). Expressed in the somatic cyst cells of the testes, with increased expression at the tail end of elongating cysts. Expressed in the ovaries with strong expression in the posterior polar cells and in border cells of stage 8, 9, and 10 follicles. In adults and third-instar larvae, expressed in the brain, ventral ganglion, and stellate cells. Also expressed in the foregut and the imaginal disks (eye, antennal and leg) of third-instar larvae. In stage 17 embryos, expressed in the tracheal system, foregut, hindgut and epidermis. Also expressed in the stellate cell progenitors of the caudal visceral mesoderm in embryos.

It is found in the cell membrane. Its subcellular location is the secreted. It catalyses the reaction Preferential cleavage of polypeptides between hydrophobic residues, particularly with Phe or Tyr at P1'.. Functionally, metalloendoprotease which cleaves peptides such as tachykinin peptide TK-2 at the amino side of hydrophobic residues. Functions in female fertility, embryogenesis and memory formation. Required in females for normal patterns of egg laying, probably due to its function in sperm retention and preventing sperm displacement by rival ejaculates. Also required for normal patterns of hatching due to its important role in early embryonic development. Required in the dorsal paired medial neurons for the proper formation of middle-term memory. Also required in the mushroom body neurons where it functions redundantly with neprilysins Nep3 and Nep4 in normal long-term memory formation. This chain is Neprilysin-2, found in Drosophila melanogaster (Fruit fly).